A 217-amino-acid chain; its full sequence is MLTLNKLLARGAGLAPALLKRAATVELDWDVRQKSRFDATDSQGRALGVFLPRGSVVRGGDVLVAEDGSLVRVIAAPQSVLVVRHCSEHGSAFDLLRAAYHLGNRHVPLELQPDRLQLEPDHVLADMLRAMHLIVSEAQAPFEPESGAYGEAAAHGHGHAGHDHAHDHDHGPAQASTPAPTPRGRPVGVAIKAAAPAPHVHGPGCGHDHDHGSGHHH.

A disordered region spans residues 148-217 (AYGEAAAHGH…DHDHGSGHHH (70 aa)). Over residues 160 to 171 (AGHDHAHDHDHG) the composition is skewed to basic and acidic residues. A compositionally biased stretch (low complexity) spans 193-202 (AAAPAPHVHG). The span at 206–217 (GHDHDHGSGHHH) shows a compositional bias: basic and acidic residues.

Belongs to the UreE family.

It localises to the cytoplasm. Its function is as follows. Involved in urease metallocenter assembly. Binds nickel. Probably functions as a nickel donor during metallocenter assembly. In Methylibium petroleiphilum (strain ATCC BAA-1232 / LMG 22953 / PM1), this protein is Urease accessory protein UreE.